The sequence spans 43 residues: Large ribosomal subunit protein uL5 (43 aa).

The protein belongs to the universal ribosomal protein uL5 family. As to quaternary structure, part of the 50S ribosomal subunit; part of the 5S rRNA/L5/L18/L25 subcomplex. Contacts the 5S rRNA and the P site tRNA. Forms a bridge to the 30S subunit in the 70S ribosome.

This is one of the proteins that bind and probably mediate the attachment of the 5S RNA into the large ribosomal subunit, where it forms part of the central protuberance. In the 70S ribosome it contacts protein S13 of the 30S subunit (bridge B1b), connecting the 2 subunits; this bridge is implicated in subunit movement. Contacts the P site tRNA; the 5S rRNA and some of its associated proteins might help stabilize positioning of ribosome-bound tRNAs. This chain is Large ribosomal subunit protein uL5 (rplE), found in Proteus vulgaris.